A 148-amino-acid chain; its full sequence is Nucleoside diphosphate kinase 1 (148 aa).

Residues Lys9, Phe57, Arg85, Thr91, Arg102, and Asn112 each coordinate ATP. His115 serves as the catalytic Pros-phosphohistidine intermediate.

It belongs to the NDK family. Mg(2+) is required as a cofactor. In terms of processing, the N-terminus is blocked.

It catalyses the reaction a 2'-deoxyribonucleoside 5'-diphosphate + ATP = a 2'-deoxyribonucleoside 5'-triphosphate + ADP. The enzyme catalyses a ribonucleoside 5'-diphosphate + ATP = a ribonucleoside 5'-triphosphate + ADP. In terms of biological role, major role in the synthesis of nucleoside triphosphates other than ATP. The ATP gamma phosphate is transferred to the NDP beta phosphate via a ping-pong mechanism, using a phosphorylated active-site intermediate. This chain is Nucleoside diphosphate kinase 1 (NDPK1), found in Spinacia oleracea (Spinach).